We begin with the raw amino-acid sequence, 531 residues long: Fatty acid--[acyl-carrier-protein] ligase MmaC (531 aa).

Threonine 169 contacts Mg(2+). ATP is bound by residues isoleucine 218, valine 308, and serine 312. Residue glutamate 313 coordinates Mg(2+). Aspartate 403 provides a ligand contact to ATP.

It belongs to the ATP-dependent AMP-binding enzyme family. Mg(2+) serves as cofactor.

It carries out the reaction a (2E)-enoyl fatty acid + holo-[ACP] + ATP = a (2E)-enoyl-[ACP] + AMP + diphosphate. The catalysed reaction is a (2E)-enoyl fatty acid + ATP + H(+) = a (2E)-2-fatty-enoyl-AMP + diphosphate. The enzyme catalyses a (2E)-2-fatty-enoyl-AMP + holo-[ACP] = a (2E)-enoyl-[ACP] + AMP + H(+). It catalyses the reaction (2E)-decenoate + holo-[ACP] + ATP = (2E)-decenoyl-[ACP] + AMP + diphosphate. It carries out the reaction a (3R)-3-isocyanyl-fatty acid + holo-[ACP] + ATP = a (3R)-3-isocyanyl-fatty acyl-[ACP] + AMP + diphosphate. The catalysed reaction is a (3R)-3-isocyanyl-fatty acid + ATP + H(+) = a (3R)-3-isocyanyl-fatty acyl-AMP + diphosphate. The enzyme catalyses a (3R)-3-isocyanyl-fatty acyl-AMP + holo-[ACP] = a (3R)-3-isocyanyl-fatty acyl-[ACP] + AMP + H(+). Acyl:acyl-carrier protein ligase involved in the biosynthesis of a unique class of isonitrile lipopeptides (INLPs) that seem to play a role in metal acquisition in M.marinum. Acts twice during the INLP pathway, catalyzing the activation of (2E)-2-decenoate as well as probably the corresponding (3R)-3-isocyanyl-fatty acid as acyl-adenylates (acyl-AMP), and then the acyl transfer to the dedicated acyl-carrier protein MmaB. In Mycobacterium marinum (strain ATCC BAA-535 / M), this protein is Fatty acid--[acyl-carrier-protein] ligase MmaC.